A 542-amino-acid chain; its full sequence is MTYSIGIDFGTGSGRVFLVNTENGEIIGQYVQTYAHGTIEGELNGHKLPQSYALQNANDYMEVIETGIPEILAKTNIDAKDIVGIGIDFTSSTVIFVDDQMEPMHNNPKFYNNPHAYVKLWKHHGAQAEADLLFNTAIEEKNRWLGYYGFNVSSEWMIPKIMEVNDKAPEVMTETADIMEAGDWIVNRLTGENVRSNCGLGFKSFWESSTGFHYDLFDKVDDNLSDIVRTKVEAPIVSIGESVGTVSAEMAHKLGLSPETVVSPFIIDAHSSLLGIGAEKDKEMTMVMGTSTCHLMLNKEQHKVPGISGSVKGAIIPDLYAYEAGQTAVGDLFEYVANQSPYEYVKTAEDRGISIFELLNEKASQRYPGESGLIALDWHNGNRSVLSDSNLKGSLFGLSLQTKHEDIYRAYMEATAFGTKMIMQQYQGWQMEVERVFACGGIPKKNHLLMEIYANVLNKKITVIDSEYAPAIGAAILGAICGGAHPNFSSAIQAMKEPVLYQVEPDHAQVLIYKKLFNAYKELHDLLGYKKARIMRNVSALM.

The protein belongs to the ribulokinase family.

It carries out the reaction D-ribulose + ATP = D-ribulose 5-phosphate + ADP + H(+). The enzyme catalyses L-ribulose + ATP = L-ribulose 5-phosphate + ADP + H(+). Its pathway is carbohydrate degradation; L-arabinose degradation via L-ribulose; D-xylulose 5-phosphate from L-arabinose (bacterial route): step 2/3. This chain is Ribulokinase 2, found in Staphylococcus saprophyticus subsp. saprophyticus (strain ATCC 15305 / DSM 20229 / NCIMB 8711 / NCTC 7292 / S-41).